The following is an 806-amino-acid chain: Hyperosmolality-gated Ca2+ permeable channel 1.8 (806 aa).

Transmembrane regions (helical) follow at residues Ile7–Val27, Ile102–Val122, Lys157–Tyr177, Leu375–Val395, Phe427–Met447, Tyr467–Glu487, Ala512–Leu532, Phe576–Phe596, Val626–Ala646, and Ala650–Tyr670. A disordered region spans residues Ser726–Ser786. Residues Ser731–Thr750 are compositionally biased toward basic and acidic residues. At Thr735 the chain carries Phosphothreonine. A compositionally biased stretch (polar residues) spans Gln751–Ser762. Low complexity predominate over residues Ser775 to Ser786.

This sequence belongs to the CSC1 (TC 1.A.17) family.

Its subcellular location is the golgi apparatus membrane. The protein resides in the cell membrane. Functionally, acts as an osmosensitive calcium-permeable cation channel. This chain is Hyperosmolality-gated Ca2+ permeable channel 1.8, found in Arabidopsis thaliana (Mouse-ear cress).